The sequence spans 783 residues: Serine/threonine-protein kinase SIK1 (783 aa).

Residues 27 to 278 (YDIERTLGKG…IAQIRQHRWM (252 aa)) enclose the Protein kinase domain. ATP is bound by residues 33–41 (LGKGNFAVV) and Lys-56. The active-site Proton acceptor is the Asp-149. Residue Thr-182 is modified to Phosphothreonine; by LKB1 and GSK3-beta. Ser-186 carries the phosphoserine; by autocatalysis modification. The 41-residue stretch at 303 to 343 (DYDEQALGIMQTLGVDRQRTVESLQNSSYNHFAAIYYLLLE) folds into the UBA domain. At Thr-322 the chain carries Phosphothreonine; by CaMK1. Disordered regions lie at residues 353 to 377 (CARP…VPQE) and 449 to 477 (RQGP…LAEV). Thr-473 bears the Phosphothreonine; by PKA mark. Ser-575 bears the Phosphoserine; by PKA mark. The tract at residues 583-612 (LKAFRQQLRKTTRTKGFLGLNKIKGLARQV) is RK-rich region; required for cAMP responsiveness and nuclear localization. The disordered stretch occupies residues 619 to 643 (RASRGGLSPFHAPAQSPGLHGGAAG).

Belongs to the protein kinase superfamily. CAMK Ser/Thr protein kinase family. AMPK subfamily. As to quaternary structure, interacts with ATP1A1. Interacts (when phosphorylated on Thr-182 and Ser-186) with YWHAZ. Interacts (when phosphorylated at Thr-473 and/or Ser-575) with 14-3-3 proteins; the interaction inhibits kinase activity towards TORCs. There is a cooperative effect of the phosphorylation sites in 14-3-3 binding as the interaction is stronger when both Thr-473 and Ser-575 are modified. It depends on Mg(2+) as a cofactor. Phosphorylated at Thr-182 by STK11/LKB1 in complex with STE20-related adapter-alpha (STRADA) pseudo kinase and CAB39, leading to its activation. Phosphorylation at Thr-182 promotes autophosphorylation at Ser-186, which is required for sustained activity. Autophosphorylation at Ser-186 is maintained by sequential phosphorylation at Thr-182 by GSK3-beta. GSK3-beta cannot initiate phosphorylation at Thr-182, it can only maintain it. Phosphorylation at Ser-575 in response to cAMP signaling promotes translocation to the cytoplasm. Phosphorylation at Thr-322 by CaMK1 following intracellular sodium concentration leads to activation.

Its subcellular location is the cytoplasm. It localises to the nucleus. The catalysed reaction is L-seryl-[protein] + ATP = O-phospho-L-seryl-[protein] + ADP + H(+). It catalyses the reaction L-threonyl-[protein] + ATP = O-phospho-L-threonyl-[protein] + ADP + H(+). Its activity is regulated as follows. Activated by phosphorylation on Thr-182. Also activated by phosphorylation on Thr-322 in response to increases in intracellular sodium in parallel with elevations in intracellular calcium through the reversible sodium/calcium exchanger. Inhibited by phosphorylation at Thr-473 and Ser-575, probably by PKA, which triggers interaction with 14-3-3 proteins. In terms of biological role, serine/threonine-protein kinase involved in various processes such as cell cycle regulation, gluconeogenesis and lipogenesis regulation, muscle growth and differentiation and tumor suppression. Phosphorylates HDAC4, HDAC5, PPME1, SREBF1, CRTC1/TORC1. Inhibits CREB activity by phosphorylating and inhibiting activity of TORCs, the CREB-specific coactivators, like CRTC2/TORC2 and CRTC3/TORC3 in response to cAMP signaling. Acts as a tumor suppressor and plays a key role in p53/TP53-dependent anoikis, a type of apoptosis triggered by cell detachment: required for phosphorylation of p53/TP53 in response to loss of adhesion and is able to suppress metastasis. Part of a sodium-sensing signaling network, probably by mediating phosphorylation of PPME1: following increases in intracellular sodium, SIK1 is activated by CaMK1 and phosphorylates PPME1 subunit of protein phosphatase 2A (PP2A), leading to dephosphorylation of sodium/potassium-transporting ATPase ATP1A1 and subsequent increase activity of ATP1A1. Acts as a regulator of muscle cells by phosphorylating and inhibiting class II histone deacetylases HDAC4 and HDAC5, leading to promote expression of MEF2 target genes in myocytes. Also required during cardiomyogenesis by regulating the exit of cardiomyoblasts from the cell cycle via down-regulation of CDKN1C/p57Kip2. Acts as a regulator of hepatic gluconeogenesis by phosphorylating and repressing the CREB-specific coactivators CRTC1/TORC1 and CRTC2/TORC2, leading to inhibit CREB activity. Also regulates hepatic lipogenesis by phosphorylating and inhibiting SREBF1. In concert with CRTC1/TORC1, regulates the light-induced entrainment of the circadian clock by attenuating PER1 induction; represses CREB-mediated transcription of PER1 by phosphorylating and deactivating CRTC1/TORC1. The protein is Serine/threonine-protein kinase SIK1 (SIK1) of Homo sapiens (Human).